Here is a 658-residue protein sequence, read N- to C-terminus: Staphylocoagulase (658 aa).

A signal peptide spans 1-26; the sequence is MKKQIISLGALAVASSLFTWDNKADA. 4 stretches are compositionally biased toward polar residues: residues 391–406, 428–440, 499–514, and 521–531; these read MEQN…TQPT, GTES…QGES, PSET…QDGT, and PTQNKPSETNA. The disordered stretch occupies residues 391-531; the sequence is MEQNRPSLSD…TQNKPSETNA (141 aa). Tandem repeats lie at residues 492 to 518, 519 to 545, 546 to 572, 573 to 599, 600 to 626, and 627 to 653. The tract at residues 492–653 is 6 X 27 AA tandem repeats of A-R-P-[RT]-[FQY]-[NK]-K-P-S-[EK]-T-N-A-Y-N-V-T-T-[NH]-[QA]-[DN]-G-[TQ]-[VA]-[ST]-Y-G; it reads ARPRFNKPSE…THADGTATYG (162 aa). Residues 619–658 are disordered; the sequence is ANGQVSYGARPTQKKPSETNAYNVTTHADGTATYGPRVTK. The segment covering 636 to 646 has biased composition (polar residues); that stretch reads ETNAYNVTTHA.

The protein belongs to the staphylocoagulase family.

Its function is as follows. Staphylocoagulase is an extracellular protein which specifically forms a complex with human prothrombin. This complex named staphylothrombin can clot fibrinogen without any proteolytic cleavage of prothrombin. The sequence is that of Staphylocoagulase from Staphylococcus aureus.